Here is a 142-residue protein sequence, read N- to C-terminus: Alpha-lactalbumin (142 aa).

The first 19 residues, methionine 1–alanine 19, serve as a signal peptide directing secretion. The 123-residue stretch at glutamate 20–leucine 142 folds into the C-type lysozyme domain. Intrachain disulfides connect cysteine 25-cysteine 139, cysteine 47-cysteine 130, cysteine 80-cysteine 96, and cysteine 92-cysteine 110. An N-linked (GlcNAc...) asparagine glycan is attached at asparagine 64. 5 residues coordinate Ca(2+): lysine 98, aspartate 101, aspartate 103, aspartate 106, and aspartate 107.

The protein belongs to the glycosyl hydrolase 22 family. In terms of assembly, lactose synthase (LS) is a heterodimer of a catalytic component, beta1,4-galactosyltransferase (beta4Gal-T1) and a regulatory component, alpha-lactalbumin (LA). Mammary gland specific. Secreted in milk.

Its subcellular location is the secreted. Functionally, regulatory subunit of lactose synthase, changes the substrate specificity of galactosyltransferase in the mammary gland making glucose a good acceptor substrate for this enzyme. This enables LS to synthesize lactose, the major carbohydrate component of milk. In other tissues, galactosyltransferase transfers galactose onto the N-acetylglucosamine of the oligosaccharide chains in glycoproteins. The polypeptide is Alpha-lactalbumin (LALBA) (Bos taurus (Bovine)).